Here is a 545-residue protein sequence, read N- to C-terminus: Adenine deaminase (545 aa).

This sequence belongs to the metallo-dependent hydrolases superfamily. Adenine deaminase family. Mn(2+) serves as cofactor.

The enzyme catalyses adenine + H2O + H(+) = hypoxanthine + NH4(+). The sequence is that of Adenine deaminase from Salinibacter ruber (strain DSM 13855 / M31).